The following is a 154-amino-acid chain: Ribosome maturation factor RimP (154 aa).

This sequence belongs to the RimP family.

It is found in the cytoplasm. Its function is as follows. Required for maturation of 30S ribosomal subunits. The chain is Ribosome maturation factor RimP from Clostridium perfringens (strain SM101 / Type A).